Consider the following 722-residue polypeptide: Probable C-mannosyltransferase DPY19L4 (722 aa).

Positions 1–34 (MAKEEGTSVEPRQRKKQRTSGSQEAKAEKIRRTP) are disordered. The residue at position 2 (Ala-2) is an N-acetylalanine. Basic and acidic residues predominate over residues 25 to 34 (AKAEKIRRTP). The next 12 helical transmembrane spans lie at 51–71 (IVIG…YLSA), 160–177 (VYFY…YVTA), 183–201 (WLMS…WFLI), 246–262 (FCYL…MMVW), 268–284 (VLFL…IFSV), 291–307 (YEVY…GYLL), 313–331 (ALLV…LVKC), 351–369 (FYLL…KMFV), 420–440 (LLPF…QVFF), 465–485 (IIYH…MEGL), 487–507 (FIWT…PELW), and 521–541 (PMLL…LSLW).

It belongs to the dpy-19 family.

It localises to the membrane. Functionally, probable C-mannosyltransferase that mediates C-mannosylation of tryptophan residues on target proteins. The protein is Probable C-mannosyltransferase DPY19L4 (Dpy19l4) of Mus musculus (Mouse).